A 388-amino-acid polypeptide reads, in one-letter code: Norsolorinic acid reductase A (388 aa).

An NADP(+)-binding site is contributed by Asp69. Residue Tyr74 is the Proton donor of the active site. Residue His148 coordinates substrate. Residues 178-179 (SD), Gln204, 233-243 (GVLGRGQFRSA), and 300-308 (RKVEHLKEN) contribute to the NADP(+) site.

This sequence belongs to the aldo/keto reductase family. Aldo/keto reductase 2 subfamily.

It functions in the pathway mycotoxin biosynthesis; aflatoxin biosynthesis. Norsolorinic acid reductase; part of the gene cluster that mediates the biosynthesis of aflatoxins, a group of polyketide-derived furanocoumarins, and part of the most toxic and carcinogenic compounds among the known mycotoxins. The four major aflatoxins produced by A.parasiticus are aflatoxin B1 (AFB1), aflatoxin B2 (AFB2), aflatoxin G1 (AFG1) and aflatoxin G2 (AFG2). Within the aflatoxin pathway, the norsolorinic acid reductase aflE may play a role in the conversion of norsolorinic acid (NOR) to averantin (AVN). The biosynthesis of aflatoxins begins with the norsolorinic acid synthase aflC that combines a hexanoyl starter unit produced by the fatty acid synthase aflA/aflB and 7 malonyl-CoA extender units to synthesize the precursor NOR. The second step is the conversion of NOR to averantin and requires the norsolorinic acid ketoreductase aflD, which catalyzes the dehydration of norsolorinic acid to form (1'S)-averantin. The norsolorinic acid reductases aflE and aflF may also play a role in the conversion of NOR to AVN. The cytochrome P450 monooxygenase aflG then catalyzes the hydroxylation of AVN to 5'hydroxyaverantin (HAVN). The next step is performed by the 5'-hydroxyaverantin dehydrogenase aflH that transforms HAVN to 5'-oxoaverantin (OAVN) which is further converted to averufin (AVF) by aflK that plays a dual role in the pathway, as a 5'-oxoaverantin cyclase that mediates conversion of 5'-oxoaverantin, as well as a versicolorin B synthase in a later step in the pathway. The averufin oxidase aflI catalyzes the conversion of AVF to versiconal hemiacetal acetate (VHA). VHA is then the substrate for the versiconal hemiacetal acetate esterase aflJ to yield versiconal (VAL). Versicolorin B synthase aflK then converts VAL to versicolorin B (VERB) by closing the bisfuran ring of aflatoxin which is required for DNA-binding, thus giving to aflatoxin its activity as a mutagen. Then, the activity of the versicolorin B desaturase aflL leads to versicolorin A (VERA). A branch point starts from VERB since it can also be converted to dihydrodemethylsterigmatocystin (DMDHST), probably also by aflL, VERA being a precursor for aflatoxins B1 and G1, and DMDHST for aflatoxins B2 and G2. Next, the versicolorin reductase aflM and the cytochrome P450 monooxygenase aflN are involved in conversion of VERA to demethylsterigmatocystin (DMST). AflX and aflY seem also involved in this step, through probable aflX-mediated epoxide ring-opening step following versicolorin A oxidation and aflY-mediated Baeyer-Villiger oxidation required for the formation of the xanthone ring. The methyltransferase aflO then leads to the modification of DMST to sterigmatocystin (ST), and of DMDHST to dihydrosterigmatocystin (DHST). Both ST and DHST are then substrates of the O-methyltransferase aflP to yield O-methylsterigmatocystin (OMST) and dihydro-O-methylsterigmatocystin (DHOMST), respectively. Finally OMST is converted to aflatoxins B1 and G1, and DHOMST to aflatoxins B2 and G2, via the action of several enzymes including O-methylsterigmatocystin oxidoreductase aflQ, the cytochrome P450 monooxygenase aflU, but also the NADH-dependent flavin oxidoreductase nadA which is specifically required for the synthesis of AFG1. This chain is Norsolorinic acid reductase A, found in Aspergillus parasiticus (strain ATCC 56775 / NRRL 5862 / SRRC 143 / SU-1).